A 414-amino-acid polypeptide reads, in one-letter code: MKIYIVGGAVRDELLGVAVKDRDYVVVGATPEQMIAQNYTPVGKDFPVFLHPVTHEEYALARTERKTAPGYKGFVFHTDAGVTLEEDLIRRDLTVNAMAKDADGRIIDPFGGRRDLEQKIFRHVSSAFAEDPVRILRVARFAARFPQFSVAAETNALMQAMVAAGEVDALVPERTWQELARGLMEVQPSRMFAVLRDCGALQRMLPELDALWGVPQPEKYHPEIDTGVHVMMVVDHAAQQNLALPIRCAALFHDLGKGVTPPEMWPRHHGHEMQSAKLVETVCQRLKIPNDCRDLSVMTAREHGNIGRALELRAATIVTLFERCDAFRKPQRFIDMLQASECDHRGRTGFADVPFPQNAYMQKALAAAQTVNGGEIAALMQQRWPDQPARIPEAIHEARVKAVALAINEVKTPG.

Residues Gly-8 and Arg-11 each coordinate ATP. Positions 8 and 11 each coordinate CTP. Positions 21 and 23 each coordinate Mg(2+). ATP is bound by residues Arg-91, Arg-137, and Arg-140. CTP contacts are provided by Arg-91, Arg-137, and Arg-140. In terms of domain architecture, HD spans 226 to 327 (TGVHVMMVVD…VTLFERCDAF (102 aa)).

It belongs to the tRNA nucleotidyltransferase/poly(A) polymerase family. Bacterial CCA-adding enzyme type 1 subfamily. Monomer. Can also form homodimers and oligomers. Requires Mg(2+) as cofactor. Ni(2+) serves as cofactor.

It catalyses the reaction a tRNA precursor + 2 CTP + ATP = a tRNA with a 3' CCA end + 3 diphosphate. It carries out the reaction a tRNA with a 3' CCA end + 2 CTP + ATP = a tRNA with a 3' CCACCA end + 3 diphosphate. Functionally, catalyzes the addition and repair of the essential 3'-terminal CCA sequence in tRNAs without using a nucleic acid template. Adds these three nucleotides in the order of C, C, and A to the tRNA nucleotide-73, using CTP and ATP as substrates and producing inorganic pyrophosphate. tRNA 3'-terminal CCA addition is required both for tRNA processing and repair. Also involved in tRNA surveillance by mediating tandem CCA addition to generate a CCACCA at the 3' terminus of unstable tRNAs. While stable tRNAs receive only 3'-terminal CCA, unstable tRNAs are marked with CCACCA and rapidly degraded. The sequence is that of Multifunctional CCA protein from Herminiimonas arsenicoxydans.